Reading from the N-terminus, the 387-residue chain is Gamma-butyrobetaine dioxygenase (387 aa).

Zn(2+) contacts are provided by Cys38, Cys40, Cys43, and His82. 3 residues coordinate Fe cation: His202, Asp204, and His347. The residue at position 351 (Ser351) is a Phosphoserine.

This sequence belongs to the gamma-BBH/TMLD family. Fe(2+) serves as cofactor. L-ascorbate is required as a cofactor.

The protein resides in the cytoplasm. It carries out the reaction 4-(trimethylamino)butanoate + 2-oxoglutarate + O2 = carnitine + succinate + CO2. It participates in amine and polyamine biosynthesis; carnitine biosynthesis. Catalyzes the formation of L-carnitine from gamma-butyrobetaine. This is Gamma-butyrobetaine dioxygenase (BBOX1) from Pongo abelii (Sumatran orangutan).